The following is a 336-amino-acid chain: Alpha-N-acetylgalactosaminide alpha-2,6-sialyltransferase 5 (336 aa).

Residues 1–8 (MKTLMRHG) are Cytoplasmic-facing. The chain crosses the membrane as a helical; Signal-anchor for type II membrane protein span at residues 9–29 (LAVCLVLTTMCTSLLLVYSSL). The Lumenal segment spans residues 30-336 (GSQKERPPQQ…VNHAEGKPVF (307 aa)). The segment at 34 to 76 (ERPPQQQQQQQQQQQQAATATGSTQLVESSPQPRRTAPAGPRQ) is disordered. A compositionally biased stretch (low complexity) spans 38 to 49 (QQQQQQQQQQQQ). Residues 50 to 66 (AATATGSTQLVESSPQP) are compositionally biased toward polar residues. A disulfide bond links cysteine 96 and cysteine 245. N-linked (GlcNAc...) asparagine glycosylation is found at asparagine 137 and asparagine 161.

Belongs to the glycosyltransferase 29 family. In terms of tissue distribution, high expression in forebrain and to a lesser extent in cerebellum. No expression in salivary gland, intestine, liver, kidney, heart, lung, thymus and spleen.

The protein localises to the golgi apparatus membrane. It catalyses the reaction a ganglioside GM1b (d18:1(4E)) + CMP-N-acetyl-beta-neuraminate = a ganglioside GD1alpha (d18:1(4E)) + CMP + H(+). The enzyme catalyses N-acetyl-alpha-neuraminosyl-(2-&gt;3)-beta-D-galactosyl-(1-&gt;3)-N-acetyl-beta-D-glucosaminyl-(1-&gt;3)-beta-D-galactosyl-(1-&gt;4)-beta-D-glucosyl-(1&lt;-&gt;1')-N-acyl-sphing-4-enine + CMP-N-acetyl-beta-neuraminate = N-acetyl-alpha-neuraminosyl-(2-&gt;3)-beta-D-galactosyl-(1-&gt;3)-[N-acetyl-alpha-neuraminosyl-(2-&gt;6)]-N-acetyl-beta-D-glucosaminyl-(1-&gt;3)-beta-D-galactosyl-(1-&gt;4)-beta-D-glucosyl-(1&lt;-&gt;1')-N-acyl-sphing-4-enine + CMP + H(+). It functions in the pathway glycolipid biosynthesis. Functionally, predominantly catalyzes the biosynthesis of ganglioside GD1alpha from GM1b in the brain, by transferring the sialyl group (N-acetyl-alpha-neuraminyl or NeuAc) from CMP-NeuAc to the GalNAc residue on the NeuAc-alpha-2,3-Gal-beta-1,3-GalNAc sequence of GM1b. GD1alpha is a critical molecule in the communication and interaction between neuronal cells and their supportive cells, particularly in brain tissues, and functions as an adhesion molecule in the process of metastasis. Also shows activity towards sialyl Lc4Cer (N-acetyl-alpha-neuraminosyl-(2-&gt;3)-beta-D-galactosyl-(1-&gt;3)-N-acetyl-beta-D-glucosaminyl-(1-&gt;3)-beta-D-galactosyl-(1-&gt;4)-beta-D-glucosyl-(1&lt;-&gt;1')-N-acyl-sphing-4-enine) generating disialyl Lc4Cer, which can lead to the synthesis of disialyl Lewis a (Le(a)), suggested to be a cancer-associated antigen. This chain is Alpha-N-acetylgalactosaminide alpha-2,6-sialyltransferase 5 (St6galnac5), found in Mus musculus (Mouse).